The chain runs to 156 residues: Inorganic triphosphatase (156 aa).

One can recognise a CYTH domain in the interval 2–148; it reads GKEIEKKFIV…PRYLNSNLVK (147 aa). Tyrosine 29 acts as the Proton acceptor in catalysis.

In terms of assembly, homodimer.

It carries out the reaction triphosphate + H2O = phosphate + diphosphate. The catalysed reaction is ATP + H2O = ADP + phosphate + H(+). Functionally, involved in the hydrolysis of the beta-gamma-phosphoanhydride linkage of triphosphate-containing substrates (inorganic or nucleoside-linked). Catalyzes vigorously the hydrolysis of inorganic triphosphate (PPPi), however it can also catalyze the hydrolysis of ATP to ADP and phosphate. It can use ribonucleotides such as GTP, CTP, or UTP and deoxynucleotides such as dATP, dGTP, dCTP, and dTTP. The protein is Inorganic triphosphatase of Acetivibrio thermocellus (strain ATCC 27405 / DSM 1237 / JCM 9322 / NBRC 103400 / NCIMB 10682 / NRRL B-4536 / VPI 7372) (Clostridium thermocellum).